Consider the following 436-residue polypeptide: C4-dicarboxylate transport protein 2 (436 aa).

The next 9 membrane-spanning stretches (helical) occupy residues 14-34 (VLVAIAIGIALGHWYPETAVA), 45-65 (LIKMAIAPIIFCTVVTGIAGM), 77-97 (MALLYFEIVSTVALIIGLVVV), 142-162 (VVGAFANGDILQVLFFSVLFG), 198-218 (PIGAFGAMAFTIGAYGVGSLV), 223-243 (LMLCFYITCLLFVLIVLGGIA), 290-310 (VVGLVIPTGYSFNLDGTSIYL), 331-351 (ITLLLVLLIASKGAAGVTGSG), and 353-373 (IVLAATLSAVGHLPVAGLALI). The disordered stretch occupies residues 414 to 436 (ELAGEGNASSPASDIPVGGREAV).

The protein belongs to the dicarboxylate/amino acid:cation symporter (DAACS) (TC 2.A.23) family.

Its subcellular location is the cell inner membrane. Its function is as follows. Responsible for the transport of dicarboxylates such as succinate, fumarate, and malate from the periplasm across the membrane. The chain is C4-dicarboxylate transport protein 2 from Pseudomonas paraeruginosa (strain DSM 24068 / PA7) (Pseudomonas aeruginosa (strain PA7)).